Here is an 86-residue protein sequence, read N- to C-terminus: Acyl-CoA-binding protein homolog (86 aa).

Residues Val-2–Ala-86 form the ACB domain. An acyl-CoA contacts are provided by residues Lys-14, Tyr-29–Lys-33, Lys-51, Lys-55, and Tyr-74.

It belongs to the ACBP family. In terms of tissue distribution, expressed in larval and pupal brains. In adults, expressed in cardia, part of the Malpighian tubules, fat body, and gametes of both sexes.

Binds medium- and long-chain acyl-CoA esters with very high affinity and may function as an intracellular carrier of acyl-CoA esters. May be involved in energy metabolism in a manner that depends on the substrate used for energy production. Dbi and its metabolites are involved in the regulation of multiple biological processes. The chain is Acyl-CoA-binding protein homolog from Drosophila melanogaster (Fruit fly).